The sequence spans 188 residues: Killer cell lectin-like receptor subfamily G member 1 (188 aa).

Over 1 to 33 the chain is Cytoplasmic; sequence MADSSIYSTLELPEAPQVQDESRWKLKAVLHRP. Residues 5 to 10 carry the ITIM motif motif; that stretch reads SIYSTL. A helical; Signal-anchor for type II membrane protein transmembrane segment spans residues 34–56; it reads HLSRFAMVALGLLTVILMSLLMY. Residues 57–188 are Extracellular-facing; sequence QRILCCGSKD…LQWICKKVLY (132 aa). C75 and C86 are oxidised to a cystine. N-linked (GlcNAc...) asparagine glycans are attached at residues N82 and N97. The C-type lectin domain occupies 82 to 184; sequence NGSHCYYFSM…CEVALQWICK (103 aa). 2 cysteine pairs are disulfide-bonded: C103–C183 and C162–C175.

In terms of assembly, forms a monomer and homodimer; disulfide-linked. Interacts (via ITIM motif) with PTPN11 and INPP5D. Post-translationally, phosphorylated in response to monoclonal antibody G63 binding and antigenic stimulation. In terms of tissue distribution, expressed specifically on natural killer (NK) cells and activated CD8 T-cells. Not detected in spleen, thymus, lymph node, testis, brain or kidney. Not detected on mast cell lines, bone marrow-derived mast cells, or peritoneal mast cells.

The protein resides in the cell membrane. Plays an inhibitory role on natural killer (NK) cells and T-cell functions upon binding to their non-MHC ligands. May mediate missing self recognition by binding to a highly conserved site on classical cadherins, enabling it to monitor expression of E-cadherin/CDH1, N-cadherin/CDH2 and R-cadherin/CDH4 on target cells. The chain is Killer cell lectin-like receptor subfamily G member 1 (Klrg1) from Mus musculus (Mouse).